We begin with the raw amino-acid sequence, 185 residues long: Elongation factor P (185 aa).

This sequence belongs to the elongation factor P family.

It localises to the cytoplasm. It functions in the pathway protein biosynthesis; polypeptide chain elongation. Involved in peptide bond synthesis. Stimulates efficient translation and peptide-bond synthesis on native or reconstituted 70S ribosomes in vitro. Probably functions indirectly by altering the affinity of the ribosome for aminoacyl-tRNA, thus increasing their reactivity as acceptors for peptidyl transferase. The polypeptide is Elongation factor P (Bacillus cereus (strain B4264)).